The chain runs to 621 residues: DnaJ homolog subfamily C member 2 (621 aa).

The residue at position 1 (methionine 1) is an N-acetylmethionine. Phosphoserine occurs at positions 47, 49, 60, and 63. Residues 88 to 161 enclose the J domain; it reads DHYAVLGLGH…VKRRAFNSVD (74 aa). Residues 160 to 250 are ZRF1-UBD; sequence VDPTFDNSVP…RDERKWIEKQ (91 aa). Phosphoserine is present on serine 183. Disordered regions lie at residues 287 to 312 and 426 to 453; these read GKAK…KEKQ and KEEA…GSKN. 2 SANT domains span residues 449 to 511 and 549 to 604; these read SGSK…KLDP and IDSI…EMVK.

In terms of assembly, component of ribosome-associated complex (RAC), a heterodimer composed of Hsp70/DnaK-type chaperone HSPA14 and Hsp40/DnaJ-type chaperone DNAJC2. Interacts (via ZRF1-UBD region) with ID1. Post-translationally, phosphorylated in M (mitotic) phase.

It localises to the nucleus. The protein localises to the cytoplasm. It is found in the cytosol. In terms of biological role, acts both as a chaperone in the cytosol and as a chromatin regulator in the nucleus. When cytosolic, acts as a molecular chaperone: component of the ribosome-associated complex (RAC), a complex involved in folding or maintaining nascent polypeptides in a folding-competent state. In the RAC complex, stimulates the ATPase activity of the ribosome-associated pool of Hsp70-type chaperones HSPA14 that bind to the nascent polypeptide chain. When nuclear, mediates the switching from polycomb-repressed genes to an active state: specifically recruited at histone H2A ubiquitinated at 'Lys-119' (H2AK119ub), and promotes the displacement of the polycomb PRC1 complex from chromatin, thereby facilitating transcription activation. The protein is DnaJ homolog subfamily C member 2 (Dnajc2) of Rattus norvegicus (Rat).